Reading from the N-terminus, the 158-residue chain is SUMO-conjugating enzyme UBC9 (158 aa).

Residues Ile4–Pro157 enclose the UBC core domain. The interval Arg13–Lys18 is interaction with SUMO1. The active-site Glycyl thioester intermediate is Cys93.

The protein belongs to the ubiquitin-conjugating enzyme family. As to quaternary structure, interacts with SOX9.

Its subcellular location is the nucleus. The protein resides in the cytoplasm. It participates in protein modification; protein sumoylation. Accepts the ubiquitin-like proteins SUMO1, SUMO2 and SUMO3 from the UBLE1A-UBLE1B E1 complex and catalyzes their covalent attachment to other proteins with the help of an E3 ligase such as RANBP2 or CBX4. Essential for nuclear architecture and chromosome segregation. The sequence is that of SUMO-conjugating enzyme UBC9 (UBE2I) from Gallus gallus (Chicken).